We begin with the raw amino-acid sequence, 583 residues long: Leucine-rich repeat-containing protein 47 (583 aa).

Alanine 2 is subject to N-acetylalanine. 7 LRR repeats span residues 76–95 (QLHS…SPEL), 100–121 (ALRV…QGLG), 130–152 (QLQS…ARCA), 154–175 (RLQS…LFRP), 180–202 (LLSE…AHLA), 203–225 (SLKT…ADCP), and 226–246 (KLKE…EKMV). The disordered stretch occupies residues 260-300 (VGGRGGGKGKGRAEGSEKEESRRKRRERKQRREGGDGEEQD). The span at 270-281 (GRAEGSEKEESR) shows a compositional bias: basic and acidic residues. Residues serine 315 and serine 431 each carry the phosphoserine modification. Residues 402 to 437 (LGRKEAKAKELVRQLQLEAEEQRKQKKRQSVSGLHR) are a coiled coil. Tyrosine 509 carries the post-translational modification Phosphotyrosine. A disordered region spans residues 513 to 544 (NKEEGSLSDTEADAVSGQLPDPTTNPSAGKDG). Phosphoserine is present on residues serine 518 and serine 520.

This Homo sapiens (Human) protein is Leucine-rich repeat-containing protein 47 (LRRC47).